Reading from the N-terminus, the 403-residue chain is Creatinase (403 aa).

Residue His232 is part of the active site.

This sequence belongs to the peptidase M24 family. Creatinase subfamily. As to quaternary structure, homodimer.

It carries out the reaction creatine + H2O = sarcosine + urea. The chain is Creatinase from Pseudomonas putida (Arthrobacter siderocapsulatus).